Consider the following 569-residue polypeptide: Acyl-CoA-binding domain-containing protein 5 (569 aa).

A signal peptide spans 1 to 31 (MELFYELLLTAAASLLVAFLLARLLASAATA). One can recognise an ACB domain in the interval 415-506 (IEKRFGVAAA…LSEAIPGWMG (92 aa)). 2 residues coordinate an acyl-CoA: Lys474 and Tyr493. N-linked (GlcNAc...) asparagine glycosylation occurs at Asn508. 2 stretches are compositionally biased toward polar residues: residues 533 to 544 (INQHDSQGNEDN) and 552 to 569 (LTSS…IPAE). A disordered region spans residues 533–569 (INQHDSQGNEDNTGMYEGHLTSSPNPEKGQSSDIPAE).

It belongs to the ACBP family. As to expression, highly expressed in seeds and leaves. Expressed at low levels in roots.

It is found in the endoplasmic reticulum. In terms of biological role, binds medium- and long-chain acyl-CoA esters with high affinity. Can interact in vitro with palmitoyl-CoA and linolenoyl-CoA. Binds phosphatidic acid (PA) and phosphatidylcholine (PC) in vitro. May play a role in the biosynthesis of phospholipids. This Oryza sativa subsp. japonica (Rice) protein is Acyl-CoA-binding domain-containing protein 5.